The chain runs to 83 residues: Toxin Aam1 (83 aa).

The first 19 residues, 1-19 (MNYLVMISLALLLMIGVES), serve as a signal peptide directing secretion. Residues 21 to 82 (RDGYIVYPHN…PIYDRSYKCY (62 aa)) form the LCN-type CS-alpha/beta domain. 4 cysteine pairs are disulfide-bonded: Cys-31–Cys-81, Cys-35–Cys-53, Cys-39–Cys-63, and Cys-43–Cys-65.

It belongs to the long (4 C-C) scorpion toxin superfamily. Sodium channel inhibitor family. Alpha subfamily. The C-terminal basic residue is removed by a carboxypeptidase. In terms of tissue distribution, expressed by the venom gland.

It localises to the secreted. In terms of biological role, alpha toxins bind voltage-independently at site-3 of sodium channels (Nav) and inhibit the inactivation of the activated channels, thereby blocking neuronal transmission. The protein is Toxin Aam1 (H1) of Androctonus amoreuxi (African fattail scorpion).